The chain runs to 180 residues: MENFFNQFFESIGEDKNREGLKETPKRVQELWKFLYKGYKEDPRVALKSAYFQGVCDEMIVAQNIEFYSTCEHHLLPFLGNISVGYIPKEKIVGISAIAKLIEIYSRRLQIQERLTIQIAETFDEIIEPRGVIVVCEAKHLCMSMQGVQKQNAIIKTSVLRGLFKKDSKTRAEFMQLLKS.

3 residues coordinate Zn(2+): cysteine 71, histidine 74, and cysteine 142.

The protein belongs to the GTP cyclohydrolase I family. Toroid-shaped homodecamer, composed of two pentamers of five dimers.

It carries out the reaction GTP + H2O = 7,8-dihydroneopterin 3'-triphosphate + formate + H(+). The protein operates within cofactor biosynthesis; 7,8-dihydroneopterin triphosphate biosynthesis; 7,8-dihydroneopterin triphosphate from GTP: step 1/1. The chain is GTP cyclohydrolase 1 (folE) from Helicobacter pylori (strain ATCC 700392 / 26695) (Campylobacter pylori).